We begin with the raw amino-acid sequence, 113 residues long: Non-specific lipid-transfer protein (113 aa).

A signal peptide spans Ala1 to Ile24. Disulfide bonds link Cys26/Cys73, Cys36/Cys50, Cys51/Cys96, and Cys71/Cys110. Residue Asp30 is the site of Cis-14-hydroxy-10,13-dioxo-7-heptadecenoic acid aspartate ester attachment.

The protein belongs to the plant LTP family.

In terms of biological role, plant non-specific lipid-transfer proteins transfer phospholipids as well as galactolipids across membranes. May play a role in wax or cutin deposition in the cell walls of expanding epidermal cells and certain secretory tissues. This Triticum aestivum (Wheat) protein is Non-specific lipid-transfer protein.